The following is a 728-amino-acid chain: Catalase-peroxidase (728 aa).

The signal sequence occupies residues 1–16; it reads MDNPTDSAGKCPVAHG. Residues 1–26 form a disordered region; that stretch reads MDNPTDSAGKCPVAHGNTPRSRSNRD. The tryptophyl-tyrosyl-methioninium (Trp-Tyr) (with M-244) cross-link spans 96–218; the sequence is WHSAGTYRIT…LGAVQMGFIY (123 aa). Histidine 97 acts as the Proton acceptor in catalysis. Residues 218 to 244 constitute a cross-link (tryptophyl-tyrosyl-methioninium (Tyr-Met) (with W-96)); the sequence is YVNPEGPNGNSDPLASARDIRETFARM. Histidine 259 provides a ligand contact to heme b.

It belongs to the peroxidase family. Peroxidase/catalase subfamily. As to quaternary structure, homodimer or homotetramer. Requires heme b as cofactor. In terms of processing, formation of the three residue Trp-Tyr-Met cross-link is important for the catalase, but not the peroxidase activity of the enzyme.

The catalysed reaction is H2O2 + AH2 = A + 2 H2O. It carries out the reaction 2 H2O2 = O2 + 2 H2O. Its function is as follows. Bifunctional enzyme with both catalase and broad-spectrum peroxidase activity. This Rhizobium leguminosarum bv. phaseoli protein is Catalase-peroxidase.